The primary structure comprises 1577 residues: High molecular weight form of myosin-1 (1577 aa).

A Myosin motor domain is found at 75 to 751; it reads KSVDDLVQMD…EQRGLELQRN (677 aa). Lys-119 is modified (N6,N6,N6-trimethyllysine). 168-175 is a binding site for ATP; sequence GESGAGKT. Actin-binding stretches follow at residues 628–650 and 730–744; these read LDSL…KPNS and QVGK…PEQR. Residues 755–782 enclose the IQ domain; that stretch reads ERVTIQIQAGVRRMFARRLYKRMRAIKP. Positions 1261–1401 constitute a MyTH4 domain; the sequence is WTKSPIPTSL…PNVEQILAAK (141 aa). Disordered regions lie at residues 1442–1466 and 1483–1516; these read SRPA…QQAA and QQQQ…LPAE. Low complexity-rich tracts occupy residues 1444–1466 and 1483–1497; these read PAQA…QQAA and QQQQ…QQQA. Positions 1519–1577 constitute an SH3 domain; the sequence is EEYKQVEVVYDYDGGGDAQRLVLVKGAIITVIKEYEGWAYGSTDDGQVGLYPINYTRPI.

The protein belongs to the TRAFAC class myosin-kinesin ATPase superfamily. Myosin family. As to quaternary structure, myosin I heavy chain is single-headed.

The sequence is that of High molecular weight form of myosin-1 from Acanthamoeba castellanii (Amoeba).